The chain runs to 399 residues: Tryptophan synthase beta chain (399 aa).

N6-(pyridoxal phosphate)lysine is present on lysine 92.

Belongs to the TrpB family. In terms of assembly, tetramer of two alpha and two beta chains. Pyridoxal 5'-phosphate is required as a cofactor.

The catalysed reaction is (1S,2R)-1-C-(indol-3-yl)glycerol 3-phosphate + L-serine = D-glyceraldehyde 3-phosphate + L-tryptophan + H2O. The protein operates within amino-acid biosynthesis; L-tryptophan biosynthesis; L-tryptophan from chorismate: step 5/5. Its function is as follows. The beta subunit is responsible for the synthesis of L-tryptophan from indole and L-serine. This chain is Tryptophan synthase beta chain, found in Exiguobacterium sibiricum (strain DSM 17290 / CCUG 55495 / CIP 109462 / JCM 13490 / 255-15).